The sequence spans 434 residues: Enolase (434 aa).

Q163 serves as a coordination point for (2R)-2-phosphoglycerate. E205 (proton donor) is an active-site residue. The Mg(2+) site is built by D242, E291, and D318. Residues K343, R372, S373, and K394 each contribute to the (2R)-2-phosphoglycerate site. Residue K343 is the Proton acceptor of the active site.

It belongs to the enolase family. It depends on Mg(2+) as a cofactor.

It localises to the cytoplasm. Its subcellular location is the secreted. It is found in the cell surface. The enzyme catalyses (2R)-2-phosphoglycerate = phosphoenolpyruvate + H2O. Its pathway is carbohydrate degradation; glycolysis; pyruvate from D-glyceraldehyde 3-phosphate: step 4/5. In terms of biological role, catalyzes the reversible conversion of 2-phosphoglycerate (2-PG) into phosphoenolpyruvate (PEP). It is essential for the degradation of carbohydrates via glycolysis. This is Enolase from Streptococcus thermophilus (strain ATCC BAA-491 / LMD-9).